The sequence spans 403 residues: Phosphopentomutase (403 aa).

Residues Asp13, Asp298, His303, Asp339, His340, and His351 each contribute to the Mn(2+) site.

Belongs to the phosphopentomutase family. Mn(2+) serves as cofactor.

The protein resides in the cytoplasm. It catalyses the reaction 2-deoxy-alpha-D-ribose 1-phosphate = 2-deoxy-D-ribose 5-phosphate. It carries out the reaction alpha-D-ribose 1-phosphate = D-ribose 5-phosphate. It functions in the pathway carbohydrate degradation; 2-deoxy-D-ribose 1-phosphate degradation; D-glyceraldehyde 3-phosphate and acetaldehyde from 2-deoxy-alpha-D-ribose 1-phosphate: step 1/2. Its function is as follows. Isomerase that catalyzes the conversion of deoxy-ribose 1-phosphate (dRib-1-P) and ribose 1-phosphate (Rib-1-P) to deoxy-ribose 5-phosphate (dRib-5-P) and ribose 5-phosphate (Rib-5-P), respectively. This is Phosphopentomutase from Streptococcus pyogenes serotype M2 (strain MGAS10270).